Reading from the N-terminus, the 487-residue chain is UDP-N-acetylmuramoyl-L-alanyl-D-glutamate--2,6-diaminopimelate ligase (487 aa).

Positions 23 and 25 each coordinate UDP-N-acetyl-alpha-D-muramoyl-L-alanyl-D-glutamate. 108–114 provides a ligand contact to ATP; that stretch reads GTNGKTS. Residues 150–151, serine 177, glutamine 183, and arginine 185 contribute to the UDP-N-acetyl-alpha-D-muramoyl-L-alanyl-D-glutamate site; that span reads TT. Residue lysine 217 is modified to N6-carboxylysine. Meso-2,6-diaminopimelate is bound by residues arginine 378, 402–405, glycine 453, and glutamate 457; that span reads DNPR. The Meso-diaminopimelate recognition motif signature appears at 402 to 405; sequence DNPR.

The protein belongs to the MurCDEF family. MurE subfamily. Requires Mg(2+) as cofactor. In terms of processing, carboxylation is probably crucial for Mg(2+) binding and, consequently, for the gamma-phosphate positioning of ATP.

Its subcellular location is the cytoplasm. It carries out the reaction UDP-N-acetyl-alpha-D-muramoyl-L-alanyl-D-glutamate + meso-2,6-diaminopimelate + ATP = UDP-N-acetyl-alpha-D-muramoyl-L-alanyl-gamma-D-glutamyl-meso-2,6-diaminopimelate + ADP + phosphate + H(+). It participates in cell wall biogenesis; peptidoglycan biosynthesis. Its function is as follows. Catalyzes the addition of meso-diaminopimelic acid to the nucleotide precursor UDP-N-acetylmuramoyl-L-alanyl-D-glutamate (UMAG) in the biosynthesis of bacterial cell-wall peptidoglycan. The polypeptide is UDP-N-acetylmuramoyl-L-alanyl-D-glutamate--2,6-diaminopimelate ligase (Ectopseudomonas mendocina (strain ymp) (Pseudomonas mendocina)).